A 432-amino-acid polypeptide reads, in one-letter code: GRAM domain-containing protein 2B (432 aa).

N-acetylmethionine is present on methionine 1. 2 disordered regions span residues 1-61 (MTEL…SPDQ) and 74-106 (DGASLASDKNDCKTESKNDPKTERKKSSSSSQY). Basic and acidic residues-rich tracts occupy residues 9 to 39 (EDTKPAKVLGKRESKLGSAHSEAENGVEEKK) and 81 to 99 (DKNDCKTESKNDPKTERKK). A GRAM domain is found at 110 to 177 (MHFHKLFLSV…FSVTLIKKTK (68 aa)). Positions 220-233 (TSVGNSPNPSSAEN) are enriched in polar residues. The interval 220 to 239 (TSVGNSPNPSSAENSFRADR) is disordered. Phosphoserine is present on residues serine 225, serine 242, and serine 252. Positions 262-285 (RQDMEGYSSSGSQTPESENSRDFH) are disordered. The segment covering 268–278 (YSSSGSQTPES) has biased composition (polar residues).

The polypeptide is GRAM domain-containing protein 2B (GRAMD2B) (Homo sapiens (Human)).